The following is a 347-amino-acid chain: Ileal sodium/bile acid cotransporter (347 aa).

Topologically, residues 1–29 (MSNLTVGCLANATVCEGASCVAPESNFNA) are extracellular. N-linked (GlcNAc...) asparagine glycans are attached at residues Asn-3 and Asn-11. A helical membrane pass occupies residues 30-50 (ILSVVLSTVLTILLALVMFSM). Over 51 to 83 (GCNVEIKKFLGHIRRPWGIFIGFLCQFGIMPLT) the chain is Cytoplasmic. The chain crosses the membrane as a helical span at residues 84-104 (GFVLAVAFGIMPIQAVVVLIM). Residues 105–127 (GCCPGGTASNILAYWVDGDMDLS) lie on the Extracellular side of the membrane. Residues 128–148 (VSMTTCSTLLALGMMPLCLYV) traverse the membrane as a helical segment. The Cytoplasmic segment spans residues 149–158 (YTKMWVDSGT). The helical transmembrane segment at 159-179 (IVIPYDNIGTSLVALVVPVSI) threads the bilayer. The Extracellular portion of the chain corresponds to 180 to 196 (GMFVNHKWPQKAKIILK). The helical transmembrane segment at 197 to 217 (VGSIAGAVLIVLIAVVGGILY) threads the bilayer. Topologically, residues 218-225 (QSAWIIEP) are cytoplasmic. The chain crosses the membrane as a helical span at residues 226–246 (KLWIIGTIFPMAGYSLGFFLA). Residues 247-289 (RIAGQPWYRCRTVALETGMQNTQLCSTIVQLSFSPEDLTYVFT) are Extracellular-facing. Residues 290–310 (FPLIYSIFQIAFAAIFLGIYV) form a helical membrane-spanning segment. Residues 311 to 347 (AYRKCHGKNDAEFPDIKDTKTEPESSFHQMNGGFQPE) are Cytoplasmic-facing. Residues 323 to 335 (FPDIKDTKTEPES) are compositionally biased toward basic and acidic residues. Positions 323 to 347 (FPDIKDTKTEPESSFHQMNGGFQPE) are disordered. Ser-336 carries the post-translational modification Phosphoserine.

It belongs to the bile acid:sodium symporter (BASS) (TC 2.A.28) family. In terms of assembly, monomer and homodimer.

The protein localises to the membrane. It catalyses the reaction taurocholate(out) + 2 Na(+)(out) = taurocholate(in) + 2 Na(+)(in). The catalysed reaction is cholate(out) + 2 Na(+)(out) = cholate(in) + 2 Na(+)(in). It carries out the reaction taurochenodeoxycholate(out) + 2 Na(+)(out) = taurochenodeoxycholate(in) + 2 Na(+)(in). The enzyme catalyses tauroursodeoxycholate(out) + 2 Na(+)(out) = tauroursodeoxycholate(in) + 2 Na(+)(in). It catalyses the reaction glycocholate(out) + 2 Na(+)(out) = glycocholate(in) + 2 Na(+)(in). The catalysed reaction is tauronorcholate(out) + 2 Na(+)(out) = tauronorcholate(in) + 2 Na(+)(in). It carries out the reaction tauroallocholate(out) + 2 Na(+)(out) = tauroallocholate(in) + 2 Na(+)(in). The enzyme catalyses taurodeoxycholate(out) + 2 Na(+)(out) = taurodeoxycholate(in) + 2 Na(+)(in). It catalyses the reaction tauro-beta-muricholate(out) + 2 Na(+)(out) = tauro-beta-muricholate(in) + 2 Na(+)(in). Plays a critical role in the sodium-dependent reabsorption of bile acids from the lumen of the small intestine. Transports various bile acids, unconjugated or conjugated, such as cholate and taurocholate. Also responsible for bile acid transport in the renal proximal tubules, a salvage mechanism that helps conserve bile acids. Works collaboratively with the Na(+)-taurocholate cotransporting polypeptide (NTCP), the organic solute transporter (OST), and the bile salt export pump (BSEP), to ensure efficacious biological recycling of bile acids during enterohepatic circulation. The sequence is that of Ileal sodium/bile acid cotransporter (SLC10A2) from Oryctolagus cuniculus (Rabbit).